Consider the following 488-residue polypeptide: Probable Xaa-Pro aminopeptidase ATEG_00858 (488 aa).

The Mn(2+) site is built by Asp-273, Asp-284, Glu-417, and Glu-456.

Belongs to the peptidase M24B family. Requires Mn(2+) as cofactor.

The enzyme catalyses Release of any N-terminal amino acid, including proline, that is linked to proline, even from a dipeptide or tripeptide.. Its function is as follows. Catalyzes the removal of a penultimate prolyl residue from the N-termini of peptides. This Aspergillus terreus (strain NIH 2624 / FGSC A1156) protein is Probable Xaa-Pro aminopeptidase ATEG_00858.